A 378-amino-acid chain; its full sequence is MDLAGLLKSQFLCHLVFCYVFIASGLIINTIQLFTLLLWPINKQLFRKINCRLSYCISSQLVMLLEWWSGTECTIFTDPRAYLKYGKENAIVVLNHKFEIDFLCGWSLSERFGLLGGSKVLAKKELAYVPIIGWMWYFTEMVFCSRKWEQDRKTVATSLQHLRDYPEKYFFLIHCEGTRFTEKKHEISMQVARAKGLPRLKHHLLPRTKGFAITVRSLRNVVSAVYDCTLNFRNNENPTLLGVLNGKKYHADLYVRRIPLEDIPEDDDECSAWLHKLYQEKDAFQEEYYRTGTFPETPMVPPRRPWTLVNWLFWASLVLYPFFQFLVSMIRSGSSLTLASFILVFFVASVGVRWMIGVTEIDKGSAYGNSGSKQKLND.

Residues 11–31 (FLCHLVFCYVFIASGLIINTI) form a helical membrane-spanning segment. The HXXXXD motif motif lies at 96–101 (HKFEID). 3 consecutive transmembrane segments (helical) span residues 125 to 145 (ELAY…VFCS), 307 to 327 (TLVN…QFLV), and 338 to 358 (LASF…MIGV).

It belongs to the 1-acyl-sn-glycerol-3-phosphate acyltransferase family.

It localises to the endoplasmic reticulum membrane. It catalyses the reaction a 1-acyl-sn-glycero-3-phosphate + an acyl-CoA = a 1,2-diacyl-sn-glycero-3-phosphate + CoA. The enzyme catalyses (4Z,7Z,10Z,13Z,16Z,19Z)-docosahexaenoyl-CoA + 1-hexadecanoyl-sn-glycero-3-phosphate = 1-hexadecanoyl-2-(4Z,7Z,10Z,13Z,16Z,19Z-docosahexaenoyl)-sn-glycero-3-phosphate + CoA. The catalysed reaction is 1-octadecanoyl-sn-glycero-3-phosphate + (9Z,12Z)-octadecadienoyl-CoA = 1-octadecanoyl-2-(9Z,12Z-octadecadienoyl)-sn-glycero-3-phosphate + CoA. It carries out the reaction 1-octadecanoyl-sn-glycero-3-phosphate + (4Z,7Z,10Z,13Z,16Z,19Z)-docosahexaenoyl-CoA = 1-octadecanoyl-2-(4Z,7Z,10Z,13Z,16Z,19Z-docosahexaenoyl)-sn-glycero-3-phosphate + CoA. It catalyses the reaction (4Z,7Z,10Z,13Z,16Z,19Z)-docosahexaenoyl-CoA + 1-(9Z-octadecenoyl)-sn-glycero-3-phosphate = 1-(9Z-octadecenoyl)-2-(4Z,7Z,10Z,13Z,16Z,19Z-docosahexaenoyl)-sn-glycero-3-phosphate + CoA. The protein operates within phospholipid metabolism; CDP-diacylglycerol biosynthesis; CDP-diacylglycerol from sn-glycerol 3-phosphate: step 2/3. In terms of biological role, converts 1-acyl-sn-glycerol-3-phosphate (lysophosphatidic acid or LPA) into 1,2-diacyl-sn-glycerol-3-phosphate (phosphatidic acid or PA) by incorporating an acyl moiety at the sn-2 position of the glycerol backbone. Exhibits high acyl-CoA specificity for polyunsaturated fatty acyl-CoA, especially docosahexaenoyl-CoA (22:6-CoA, DHA-CoA). This Pongo abelii (Sumatran orangutan) protein is 1-acyl-sn-glycerol-3-phosphate acyltransferase delta (AGPAT4).